An 804-amino-acid polypeptide reads, in one-letter code: G-type lectin S-receptor-like serine/threonine-protein kinase LECRK4 (804 aa).

An N-terminal signal peptide occupies residues 1 to 23 (MAPPLFLLSLQLLVLLSSPSAQA). The Bulb-type lectin domain maps to 24-150 (QNISLGTSLT…GGSTISWETF (127 aa)). The Extracellular portion of the chain corresponds to 24 to 458 (QNISLGTSLT…DKKLWILGSS (435 aa)). N-linked (GlcNAc...) asparagine glycans are attached at residues Asn-25, Asn-58, Asn-216, Asn-227, Asn-238, and Asn-243. One can recognise an EGF-like; atypical domain in the interval 290 to 341 (PENICNAQTKVGSGTCGFNSYCMFDGSNNQTSCVCPEQYSFFDEVRKYRGCR). Disulfide bonds link Cys-294–Cys-311, Cys-305–Cys-322, Cys-324–Cys-340, Cys-386–Cys-406, and Cys-390–Cys-396. N-linked (GlcNAc...) asparagine glycosylation occurs at Asn-318. Residues 349-426 (CDLDEAASMA…IMGSGVQRTV (78 aa)) form the PAN domain. Asn-434 is a glycosylation site (N-linked (GlcNAc...) asparagine). Residues 459 to 479 (LLLGGSVIANFALSSVLLFGT) form a helical membrane-spanning segment. Residues 480-804 (YCTITRKDVQ…DSSSVVNSFP (325 aa)) lie on the Cytoplasmic side of the membrane. The region spanning 514 to 790 (DGFKEVLGTG…TQMLDGADAI (277 aa)) is the Protein kinase domain. Residues 520–528 (LGTGASGIV) and Lys-544 contribute to the ATP site. The Proton acceptor role is filled by Asp-638.

Belongs to the protein kinase superfamily. Ser/Thr protein kinase family.

Its subcellular location is the membrane. It catalyses the reaction L-seryl-[protein] + ATP = O-phospho-L-seryl-[protein] + ADP + H(+). The enzyme catalyses L-threonyl-[protein] + ATP = O-phospho-L-threonyl-[protein] + ADP + H(+). Its function is as follows. Does not seem to be involved in resistance against the herbivorous insect brown planthopper (N.lugens, BPH). This Oryza sativa subsp. indica (Rice) protein is G-type lectin S-receptor-like serine/threonine-protein kinase LECRK4.